Reading from the N-terminus, the 214-residue chain is Cytochrome c biogenesis ATP-binding export protein CcmA (214 aa).

The ABC transporter domain maps to 16 to 212 (LRVSGLSLSR…PDAKRIDLGA (197 aa)). Residue 48-55 (GPNGTGKT) participates in ATP binding.

Belongs to the ABC transporter superfamily. CcmA exporter (TC 3.A.1.107) family. In terms of assembly, the complex is composed of two ATP-binding proteins (CcmA) and two transmembrane proteins (CcmB).

The protein resides in the cell inner membrane. It catalyses the reaction heme b(in) + ATP + H2O = heme b(out) + ADP + phosphate + H(+). Its function is as follows. Part of the ABC transporter complex CcmAB involved in the biogenesis of c-type cytochromes; once thought to export heme, this seems not to be the case, but its exact role is uncertain. Responsible for energy coupling to the transport system. This chain is Cytochrome c biogenesis ATP-binding export protein CcmA, found in Maricaulis maris (strain MCS10) (Caulobacter maris).